Here is a 321-residue protein sequence, read N- to C-terminus: Lipoyl synthase (321 aa).

C68, C73, C79, C94, C98, C101, and S308 together coordinate [4Fe-4S] cluster. A Radical SAM core domain is found at 80 to 297 (FNHGTATFMI…KAEALAMGFT (218 aa)).

The protein belongs to the radical SAM superfamily. Lipoyl synthase family. The cofactor is [4Fe-4S] cluster.

It is found in the cytoplasm. It catalyses the reaction [[Fe-S] cluster scaffold protein carrying a second [4Fe-4S](2+) cluster] + N(6)-octanoyl-L-lysyl-[protein] + 2 oxidized [2Fe-2S]-[ferredoxin] + 2 S-adenosyl-L-methionine + 4 H(+) = [[Fe-S] cluster scaffold protein] + N(6)-[(R)-dihydrolipoyl]-L-lysyl-[protein] + 4 Fe(3+) + 2 hydrogen sulfide + 2 5'-deoxyadenosine + 2 L-methionine + 2 reduced [2Fe-2S]-[ferredoxin]. Its pathway is protein modification; protein lipoylation via endogenous pathway; protein N(6)-(lipoyl)lysine from octanoyl-[acyl-carrier-protein]: step 2/2. Its function is as follows. Catalyzes the radical-mediated insertion of two sulfur atoms into the C-6 and C-8 positions of the octanoyl moiety bound to the lipoyl domains of lipoate-dependent enzymes, thereby converting the octanoylated domains into lipoylated derivatives. The protein is Lipoyl synthase of Edwardsiella ictaluri (strain 93-146).